Consider the following 157-residue polypeptide: Ribosome-binding factor A (157 aa).

The segment at 127–157 is disordered; it reads QQQFGSEEASVEDEVLGDDVADDADETEGKD. A compositionally biased stretch (acidic residues) spans 135 to 157; the sequence is ASVEDEVLGDDVADDADETEGKD.

Belongs to the RbfA family. In terms of assembly, monomer. Binds 30S ribosomal subunits, but not 50S ribosomal subunits or 70S ribosomes.

Its subcellular location is the cytoplasm. Its function is as follows. One of several proteins that assist in the late maturation steps of the functional core of the 30S ribosomal subunit. Associates with free 30S ribosomal subunits (but not with 30S subunits that are part of 70S ribosomes or polysomes). Required for efficient processing of 16S rRNA. May interact with the 5'-terminal helix region of 16S rRNA. This Shewanella baltica (strain OS195) protein is Ribosome-binding factor A.